A 432-amino-acid polypeptide reads, in one-letter code: MTELISIKDSSKHVDQEVKMHVWLTDKRSSGKIIFLQLRDGTAFFQGVVRKNDVTDEVFEVAKSLRQESSFYITGTVHEDARSHFGYEIQITDLKVVSNNEGYPIGNKEHGIDFLLDHRHLWLRSKKPFAIMQIRNTMFKATVDFFEKEDFIKFDAPIFMHSAPEGTTQLFHVDYFDHDAYLSQSGQLYGEAGAMAFGKIFTFGPTFRAEESKGRRHMTEFWMMEPEMAWMHQDESLDLQERYLAYMVKQVLDKNEYELKILGRDPEKLRPTTEGNFVRLPYDDAVKMLQDAGRDFKWGDDFGAPDEGYISEQYDRPVFIVNYPTSIKPFYMKKNPDNPKEYLCADVIAPEGYGEIFGGSEREGNYEVLEQQIIDAGLNLEDYQWYLDLRKFGGVPHSGFGMGFERTIAWVCHLDHIREAIPFPRLINRMQP.

The protein belongs to the class-II aminoacyl-tRNA synthetase family. As to quaternary structure, homodimer.

Its subcellular location is the cytoplasm. The enzyme catalyses tRNA(Asn) + L-asparagine + ATP = L-asparaginyl-tRNA(Asn) + AMP + diphosphate + H(+). The chain is Asparagine--tRNA ligase from Lactobacillus helveticus (strain DPC 4571).